Consider the following 313-residue polypeptide: Pyrimidine-specific ribonucleoside hydrolase RihB (313 aa).

Aspartate 11 functions as the Proton acceptor in the catalytic mechanism. The Ca(2+) site is built by aspartate 11, aspartate 16, and valine 124. Substrate contacts are provided by glutamine 227 and histidine 239. Residue aspartate 240 coordinates Ca(2+).

This sequence belongs to the IUNH family. RihB subfamily. In terms of assembly, homotetramer. Requires Ca(2+) as cofactor.

The catalysed reaction is a pyrimidine ribonucleoside + H2O = a pyrimidine nucleobase + D-ribose. Functionally, hydrolyzes cytidine or uridine to ribose and cytosine or uracil, respectively. Has a clear preference for cytidine over uridine. Strictly specific for ribonucleosides. This Escherichia coli (strain K12 / DH10B) protein is Pyrimidine-specific ribonucleoside hydrolase RihB.